The chain runs to 477 residues: Probable periplasmic serine endoprotease DegP-like (477 aa).

The first 27 residues, 1-27 (MSIPRLKSYLTMFAAVLMLGQVLTAQA), serve as a signal peptide directing secretion. Residues H117, D147, and S220 each act as charge relay system in the active site. Residues 218–220 (GNS) and 275–279 (LGVVI) each bind substrate. PDZ domains lie at 264–355 (LKKD…IRNG) and 361–466 (DISV…LRQG).

Belongs to the peptidase S1C family.

The protein resides in the periplasm. The catalysed reaction is Acts on substrates that are at least partially unfolded. The cleavage site P1 residue is normally between a pair of hydrophobic residues, such as Val-|-Val.. Might be efficient in the degradation of transiently denatured and unfolded proteins which accumulate in the periplasm following stress conditions. In Pseudomonas putida (strain GB-1), this protein is Probable periplasmic serine endoprotease DegP-like.